Here is a 123-residue protein sequence, read N- to C-terminus: Small ribosomal subunit protein uS12 (123 aa).

Asp89 is subject to 3-methylthioaspartic acid.

It belongs to the universal ribosomal protein uS12 family. Part of the 30S ribosomal subunit. Contacts proteins S8 and S17. May interact with IF1 in the 30S initiation complex.

Its function is as follows. With S4 and S5 plays an important role in translational accuracy. Interacts with and stabilizes bases of the 16S rRNA that are involved in tRNA selection in the A site and with the mRNA backbone. Located at the interface of the 30S and 50S subunits, it traverses the body of the 30S subunit contacting proteins on the other side and probably holding the rRNA structure together. The combined cluster of proteins S8, S12 and S17 appears to hold together the shoulder and platform of the 30S subunit. The sequence is that of Small ribosomal subunit protein uS12 from Myxococcus xanthus.